The sequence spans 191 residues: Orotate phosphoribosyltransferase (191 aa).

A 5-phospho-alpha-D-ribose 1-diphosphate-binding site is contributed by E116 to S124. Positions 120 and 148 each coordinate orotate.

The protein belongs to the purine/pyrimidine phosphoribosyltransferase family. PyrE subfamily. In terms of assembly, homodimer. The cofactor is Mg(2+).

It carries out the reaction orotidine 5'-phosphate + diphosphate = orotate + 5-phospho-alpha-D-ribose 1-diphosphate. The protein operates within pyrimidine metabolism; UMP biosynthesis via de novo pathway; UMP from orotate: step 1/2. Functionally, catalyzes the transfer of a ribosyl phosphate group from 5-phosphoribose 1-diphosphate to orotate, leading to the formation of orotidine monophosphate (OMP). This is Orotate phosphoribosyltransferase from Carboxydothermus hydrogenoformans (strain ATCC BAA-161 / DSM 6008 / Z-2901).